The primary structure comprises 442 residues: tRNA-2-methylthio-N(6)-dimethylallyladenosine synthase (442 aa).

An MTTase N-terminal domain is found at 2-120 (KKVFIRTFGC…LPKMIVDKET (119 aa)). Cys-11, Cys-49, Cys-83, Cys-157, Cys-161, and Cys-164 together coordinate [4Fe-4S] cluster. Positions 143–375 (RVEGGAAFVS…NEVIEAETAR (233 aa)) constitute a Radical SAM core domain. Residues 378–441 (QTMIGTVQRC…TFSLRGKVVE (64 aa)) enclose the TRAM domain.

The protein belongs to the methylthiotransferase family. MiaB subfamily. In terms of assembly, monomer. [4Fe-4S] cluster serves as cofactor.

The protein resides in the cytoplasm. The catalysed reaction is N(6)-dimethylallyladenosine(37) in tRNA + (sulfur carrier)-SH + AH2 + 2 S-adenosyl-L-methionine = 2-methylsulfanyl-N(6)-dimethylallyladenosine(37) in tRNA + (sulfur carrier)-H + 5'-deoxyadenosine + L-methionine + A + S-adenosyl-L-homocysteine + 2 H(+). Its function is as follows. Catalyzes the methylthiolation of N6-(dimethylallyl)adenosine (i(6)A), leading to the formation of 2-methylthio-N6-(dimethylallyl)adenosine (ms(2)i(6)A) at position 37 in tRNAs that read codons beginning with uridine. In Neisseria meningitidis serogroup C / serotype 2a (strain ATCC 700532 / DSM 15464 / FAM18), this protein is tRNA-2-methylthio-N(6)-dimethylallyladenosine synthase.